The primary structure comprises 413 residues: Aspartate aminotransferase, cytoplasmic (413 aa).

L-aspartate is bound by residues Gly-39, Trp-141, and Asn-195. N6-(pyridoxal phosphate)lysine is present on Lys-259. Residue Arg-387 coordinates L-aspartate.

It belongs to the class-I pyridoxal-phosphate-dependent aminotransferase family. Homodimer. It depends on pyridoxal 5'-phosphate as a cofactor.

It localises to the cytoplasm. It carries out the reaction L-aspartate + 2-oxoglutarate = oxaloacetate + L-glutamate. The catalysed reaction is L-cysteine + 2-oxoglutarate = 2-oxo-3-sulfanylpropanoate + L-glutamate. The enzyme catalyses (2S)-2-aminobutanoate + 2-oxoglutarate = 2-oxobutanoate + L-glutamate. It catalyses the reaction 3-sulfino-L-alanine + 2-oxoglutarate = 3-sulfinopyruvate + L-glutamate. In terms of biological role, biosynthesis of L-glutamate from L-aspartate or L-cysteine. Important regulator of levels of glutamate, the major excitatory neurotransmitter of the vertebrate central nervous system. Acts as a scavenger of glutamate in brain neuroprotection. The aspartate aminotransferase activity is involved in hepatic glucose synthesis during development and in adipocyte glyceroneogenesis. Using L-cysteine as substrate, regulates levels of mercaptopyruvate, an important source of hydrogen sulfide. Mercaptopyruvate is converted into H(2)S via the action of 3-mercaptopyruvate sulfurtransferase (3MST). Hydrogen sulfide is an important synaptic modulator and neuroprotectant in the brain. The protein is Aspartate aminotransferase, cytoplasmic of Bos taurus (Bovine).